A 133-amino-acid chain; its full sequence is Holo-[acyl-carrier-protein] synthase (133 aa).

Mg(2+) contacts are provided by Asp8 and Glu56.

Belongs to the P-Pant transferase superfamily. AcpS family. Requires Mg(2+) as cofactor.

It localises to the cytoplasm. The enzyme catalyses apo-[ACP] + CoA = holo-[ACP] + adenosine 3',5'-bisphosphate + H(+). Transfers the 4'-phosphopantetheine moiety from coenzyme A to a Ser of acyl-carrier-protein. This is Holo-[acyl-carrier-protein] synthase from Clostridium perfringens (strain ATCC 13124 / DSM 756 / JCM 1290 / NCIMB 6125 / NCTC 8237 / Type A).